A 602-amino-acid polypeptide reads, in one-letter code: Aspartate--tRNA(Asp/Asn) ligase (602 aa).

L-aspartate is bound at residue Glu-176. An aspartate region spans residues 200–203 (QQFK). Residues Arg-222 and His-452 each coordinate L-aspartate. 222 to 224 (RDE) contributes to the ATP binding site. Glu-490 provides a ligand contact to ATP. Arg-497 is a binding site for L-aspartate. 542 to 545 (GIDR) lines the ATP pocket.

Belongs to the class-II aminoacyl-tRNA synthetase family. Type 1 subfamily. As to quaternary structure, homodimer.

Its subcellular location is the cytoplasm. The enzyme catalyses tRNA(Asx) + L-aspartate + ATP = L-aspartyl-tRNA(Asx) + AMP + diphosphate. Functionally, aspartyl-tRNA synthetase with relaxed tRNA specificity since it is able to aspartylate not only its cognate tRNA(Asp) but also tRNA(Asn). Reaction proceeds in two steps: L-aspartate is first activated by ATP to form Asp-AMP and then transferred to the acceptor end of tRNA(Asp/Asn). The polypeptide is Aspartate--tRNA(Asp/Asn) ligase (Rickettsia canadensis (strain McKiel)).